Reading from the N-terminus, the 82-residue chain is Putative membrane protein insertion efficiency factor (82 aa).

This sequence belongs to the UPF0161 family.

It localises to the cell inner membrane. In terms of biological role, could be involved in insertion of integral membrane proteins into the membrane. The chain is Putative membrane protein insertion efficiency factor from Rickettsia typhi (strain ATCC VR-144 / Wilmington).